The following is a 348-amino-acid chain: Dihydroorotase (348 aa).

The Zn(2+) site is built by His-14 and His-16. Substrate-binding positions include 16-18 (HLR) and Asn-42. Lys-100, His-137, and His-175 together coordinate Zn(2+). Lys-100 carries the N6-carboxylysine modification. His-137 serves as a coordination point for substrate. Leu-220 provides a ligand contact to substrate. Asp-248 serves as a coordination point for Zn(2+). Asp-248 is a catalytic residue. His-252 and Ala-264 together coordinate substrate.

Belongs to the metallo-dependent hydrolases superfamily. DHOase family. Class II DHOase subfamily. In terms of assembly, homodimer. The cofactor is Zn(2+).

The enzyme catalyses (S)-dihydroorotate + H2O = N-carbamoyl-L-aspartate + H(+). It functions in the pathway pyrimidine metabolism; UMP biosynthesis via de novo pathway; (S)-dihydroorotate from bicarbonate: step 3/3. Catalyzes the reversible cyclization of carbamoyl aspartate to dihydroorotate. The chain is Dihydroorotase from Pseudomonas fluorescens (strain Pf0-1).